The sequence spans 61 residues: MAKDFVTGRKTTFGKKRSHALNQTNRSWKPNLQKVRILVDGKPKKVWVSTRALKSGKVTRV.

The disordered stretch occupies residues 1 to 26 (MAKDFVTGRKTTFGKKRSHALNQTNR).

The protein belongs to the bacterial ribosomal protein bL28 family.

This is Large ribosomal subunit protein bL28 from Ligilactobacillus salivarius (strain UCC118) (Lactobacillus salivarius).